The primary structure comprises 1270 residues: MSSNTVNQRVNFASTKNPLEYPDFLEVQLKSFQDFLQLDTPPEKRKKEGLYKVFAENFPIADTRNNFVLEFLDYYIDPPRYTIDDCIERGLTYSVPLKAKLKLYCTDPDHEDFDTVIQDVFLGPIPYMTDKATFVINGAERVVVSQLHRSPGVFFGQSVHANGTKLYSARIIPFKGSWIEFATDINNVMYAYIDRKKKLPVTTLLRAIGFENDKDILEIFNLAEDVKVNKTNLKKVVGRKLAARVLKTWIEDFVDEDTGEVVSIERNEVIIDRETVIEPEHIDEIIDSGVQNILIHKEEPNQSDYSIIYNTLQKDPSNSEKEAVLYIYRQLRNADPADDASAREVINNLFFSEKRYDLGDVGRYRINKKLNLTTDMDVRVLTKEDIIEIIKYLIELINSKADVDDIDHLSNRRVRTVGEQLSNQFAVGLARMSRTIRERMNVRDNEVFTPIDLINAKTISSVINSFFGTNALSQFMDQTNPLAEITHKRRMSALGPGGLSRERAGFEVRDVHYTHYGRLCPIETPEGPNIGLISSLCVFAKINDLGFIETPYRKVDNGKVDLSENGLVYLTAEEEEAKIIAQGNAPLNDDGTFIRNKVKSRQDADYPVVEPSEVELMDVAPQQIASIAASLIPFLEHDDANRALMGSNMMRQAVPLLRSEAPIVGTGIERQLVRDSRTQIAAEGDGVIDFVDATTIRILYDRTEDEEFVSFEPALKEYRIPKFRKTNQNMTIDLRPTCNKGDRVTKGQILTEGYSTENGELALGKNLLVAYMPWKGYNYEDAIVLNERVVREDLLTSVHVEEYSLEVRETKRGMEELTSDIPNVSEEATKDLDENGIVRVGARIQPGDILIGKITPKGESDPSPEEKLLRAIFGDKAGDVKDASLKASPSLKGVIIDKKLFSRVIKNRSSKLADKALLPKIDDEFESKVADLKRILVKKLMVLTEGKVSQGVKDYLGAEVIAKGSKFSASDFDSLDFTAIQLSDWTNDDHANGMIRDLILNFIKKYKELDAELKRKKFAITIGDELPAGIIQMAKVYIAKKRKIGVGDKMAGRHGNKGIVSRVVRQEDMPFLEDGTPVDIVLNPLGVPSRMNIGQIFEAVLGRAGKNLGVKFATPIFDGATLDDLNEWTDKAGLPRYCKTYLCDGGTGERFDQPATVGVTYMLKLGHMVEDKMHARSIGPYSLITQQPLGGKAQFGGQRFGEMEVWALEGFGASHILQEILTIKSDDVVGRSKAYEAIVKGEPMPQPGIPESLNVLLHELRGLGLSINLE.

It belongs to the RNA polymerase beta chain family. The RNAP catalytic core consists of 2 alpha, 1 beta, 1 beta' and 1 omega subunit. When a sigma factor is associated with the core the holoenzyme is formed, which can initiate transcription.

It carries out the reaction RNA(n) + a ribonucleoside 5'-triphosphate = RNA(n+1) + diphosphate. DNA-dependent RNA polymerase catalyzes the transcription of DNA into RNA using the four ribonucleoside triphosphates as substrates. The chain is DNA-directed RNA polymerase subunit beta from Bacteroides fragilis (strain ATCC 25285 / DSM 2151 / CCUG 4856 / JCM 11019 / LMG 10263 / NCTC 9343 / Onslow / VPI 2553 / EN-2).